The sequence spans 307 residues: Ornithine carbamoyltransferase (307 aa).

Residues 56–59, Q83, R107, and 134–137 contribute to the carbamoyl phosphate site; these read STRT and HPCQ. L-ornithine-binding positions include N165, D223, and 227–228; that span reads SM. Carbamoyl phosphate is bound by residues 263–264 and R291; that span reads CL.

Belongs to the aspartate/ornithine carbamoyltransferase superfamily. OTCase family.

It is found in the cytoplasm. It carries out the reaction carbamoyl phosphate + L-ornithine = L-citrulline + phosphate + H(+). It participates in amino-acid degradation; L-arginine degradation via ADI pathway; carbamoyl phosphate from L-arginine: step 2/2. Reversibly catalyzes the transfer of the carbamoyl group from carbamoyl phosphate (CP) to the N(epsilon) atom of ornithine (ORN) to produce L-citrulline. In Cupriavidus taiwanensis (strain DSM 17343 / BCRC 17206 / CCUG 44338 / CIP 107171 / LMG 19424 / R1) (Ralstonia taiwanensis (strain LMG 19424)), this protein is Ornithine carbamoyltransferase.